The following is a 629-amino-acid chain: Keratin, type II cytoskeletal 3 (629 aa).

Residues 1–182 (MNRQVCKTSG…DPQIGQVRAQ (182 aa)) are head. Phosphoserine occurs at positions 13 and 62. Positions 183–218 (EREQIKTLNNKFASFIDKVRFLEQQNKVLETKWELL) are coil 1A. One can recognise an IF rod domain in the interval 183–498 (EREQIKTLNN…KLLEGEESRM (316 aa)). Positions 219–239 (QRQGPNSVTGTNNLEPLFENR) are linker 1. The coil 1B stretch occupies residues 240 to 331 (INYLRSYLDS…TLYDAELSQM (92 aa)). Residue Lys-281 is modified to N6,N6-dimethyllysine. A linker 12 region spans residues 332-355 (QSHVSDMSVVLSMDNNRSLDLDSI). Residue Ser-349 is modified to Phosphoserine. Residues 356-494 (IAEVRAQYED…ATYRKLLEGE (139 aa)) are coil 2. The tract at residues 495-629 (ESRMSGECQS…FSQSSQRYSR (135 aa)) is tail. Positions 603 to 629 (SGGGFSSGSSSRGSSVKFSQSSQRYSR) are disordered. Positions 618-629 (VKFSQSSQRYSR) are enriched in polar residues.

Belongs to the intermediate filament family. As to quaternary structure, heterotetramer of two type I and two type II keratins. Keratin-3 associates with keratin-12. Cornea specific. Expressed in the basal cells of corneal epithelium and stroma. Also expressed in esophageal epithelium.

The sequence is that of Keratin, type II cytoskeletal 3 (KRT3) from Oryctolagus cuniculus (Rabbit).